Here is a 206-residue protein sequence, read N- to C-terminus: Probable N-acetyltransferase 14 (206 aa).

The 201-residue stretch at 6 to 206 folds into the N-acetyltransferase domain; it reads LSVREMREDE…MLVREFSKDL (201 aa). Residues 57 to 77 traverse the membrane as a helical segment; sequence FILASFALALLLPVFLAVAAV.

The protein belongs to the camello family.

It localises to the membrane. Its function is as follows. Probable acetyltransferase that binds the 5'-GGACTACAG-3' sequence of coproporphyrinogen oxidase promoter. Able to activate transcription of a reporter construct in vitro. Functionally, probable acetyltransferase. May act as a transcription factor regulating the expression of coproporphyrinogen oxidase by binding to a promoter regulatory element. This is Probable N-acetyltransferase 14 (Nat14) from Mus musculus (Mouse).